A 349-amino-acid polypeptide reads, in one-letter code: Arginine kinase (349 aa).

In terms of domain architecture, Phosphagen kinase N-terminal spans 3–85 (DLAELWEKVS…LGPVILDYHK (83 aa)). Substrate is bound at residue 58 to 62 (GVGVY). The Phosphagen kinase C-terminal domain occupies 113–349 (WIVSTRVRVG…EEIIKLEKAA (237 aa)). ATP contacts are provided by residues 116-120 (STRVR) and H179. E219 contributes to the substrate binding site. R223 contacts ATP. C265 serves as a coordination point for substrate. Residues 274–278 (RASVH) and 302–307 (RGIHGE) each bind ATP. Substrate is bound at residue E307.

This sequence belongs to the ATP:guanido phosphotransferase family.

It catalyses the reaction L-arginine + ATP = N(omega)-phospho-L-arginine + ADP + H(+). In Liolophura japonica (Chiton), this protein is Arginine kinase.